The following is a 205-amino-acid chain: MEEKQPQKTKEPSKEDEPQQKEMPTHLSLGAESKAEAKTPVLVETQTVDNANEKSEKPPENQKKLSDKDTVATKIQAWWRGTLVRRALLHAALSACIIQCWWRLILSKILKKRRQAALEAFSRKEWAAVTLQSQARMWRIRRRYCQVLNAVRIIQAYWRCRSCASRGFIKGQYRVTANQLHLQLEILLDSGPCIVTECIPFSIKE.

2 stretches are compositionally biased toward basic and acidic residues: residues 1–24 (MEEK…KEMP) and 51–68 (ANEK…LSDK). The disordered stretch occupies residues 1–68 (MEEKQPQKTK…PENQKKLSDK (68 aa)). IQ domains follow at residues 68-97 (KDTV…SACI) and 124-153 (KEWA…AVRI).

As to quaternary structure, interacts with calmodulin.

The protein resides in the cytoplasmic vesicle. It localises to the secretory vesicle. The protein localises to the acrosome. Its function is as follows. Involved in sperm capacitation and acrosome reaction. The polypeptide is IQ domain-containing protein F1 (Homo sapiens (Human)).